The chain runs to 1344 residues: Myb-binding protein 1A (1344 aa).

The interval 1-24 (MAEMKSPTKAEPATPAEAAQSDRH) is disordered. At Ala2 the chain carries N-acetylalanine. An interaction with MYB region spans residues 2–580 (AEMKSPTKAE…WDQMMSTLKE (579 aa)). Over residues 7–19 (PTKAEPATPAEAA) the composition is skewed to low complexity. Lys69 and Lys156 each carry N6-acetyllysine. 2 consecutive short sequence motifs (nuclear export signal) follow at residues 238–256 (SEDN…ANSV) and 261–279 (KLPN…ESRF). Disordered stretches follow at residues 710–751 (DEKQ…DKDV) and 1146–1344 (QRPK…VQTP). Residues 732-747 (SDMDSEDGEESEEEDR) are compositionally biased toward acidic residues. A compositionally biased stretch (basic and acidic residues) spans 1148 to 1159 (PKSEKKNAKDIP). Lys1149 participates in a covalent cross-link: Glycyl lysine isopeptide (Lys-Gly) (interchain with G-Cter in SUMO2). The interval 1152-1344 (KKNAKDIPSD…RVASRRVQTP (193 aa)) is required for nuclear and nucleolar localization. Ser1160 and Ser1164 each carry phosphoserine. A compositionally biased stretch (basic residues) spans 1168–1185 (TKRKKKGFLPETKKRKKL). Ser1187 carries the phosphoserine modification. The segment covering 1188 to 1202 (EGTTPEKNAASQQDA) has biased composition (polar residues). Position 1191 is a phosphothreonine (Thr1191). 2 positions are modified to phosphoserine: Ser1219 and Ser1244. Positions 1249–1258 (NPTLSPSTPA) are enriched in polar residues. Phosphothreonine is present on Thr1251. Ser1253 is modified (phosphoserine). Residues Thr1256 and Thr1277 each carry the phosphothreonine modification. Residues Ser1280, Ser1303, and Ser1318 each carry the phosphoserine modification. Positions 1317-1329 (LSLVSRSPSLLQS) are enriched in low complexity. Arg1322 carries the post-translational modification Citrulline. Ser1323, Ser1325, and Ser1329 each carry phosphoserine.

Belongs to the MYBBP1A family. As to quaternary structure, component of the B-WICH complex, at least composed of SMARCA5/SNF2H, BAZ1B/WSTF, SF3B1, DEK, MYO1C, ERCC6, MYBBP1A and DDX21. Binds to and represses JUN and MYB via the leucine zipper regions present in these proteins. Also binds to and represses PPARGC1A: this interaction is abrogated when PPARGC1A is phosphorylated by MAPK1/ERK. Binds to and stimulates transcription by AHR. Binds to KPNA2. Interacts with CLOCK and CRY1. Citrullinated by PADI4. As to expression, ubiquitously expressed.

It is found in the nucleus. The protein localises to the nucleolus. Its subcellular location is the cytoplasm. Its function is as follows. May activate or repress transcription via interactions with sequence specific DNA-binding proteins. Repression may be mediated at least in part by histone deacetylase activity (HDAC activity). Acts as a corepressor and in concert with CRY1, represses the transcription of the core circadian clock component PER2. Preferentially binds to dimethylated histone H3 'Lys-9' (H3K9me2) on the PER2 promoter. Has a role in rRNA biogenesis together with PWP1. This is Myb-binding protein 1A (Mybbp1a) from Mus musculus (Mouse).